We begin with the raw amino-acid sequence, 408 residues long: Secreted effector protein SseJ (408 aa).

The active-site Nucleophile is the S151. Active-site residues include D381 and H384.

The protein belongs to the 'GDSL' lipolytic enzyme family. As to quaternary structure, interacts with RhoA and indirectly with SifA.

It is found in the secreted. The protein resides in the host cytoplasm. In terms of biological role, effector proteins function to alter host cell physiology and promote bacterial survival in host tissues. This protein is required for endosomal tubulation and negatively regulates the formation of Salmonella-induced filaments (Sifs) in epithelial cells. Has both deacylase and esterification activities in vitro, but esterification is probably the dominant activity in host cells. Significantly contributes to cholesterol esterification, which reduces cellular cholesterol in cells and abrogates the ability of SifA to associate with cholesterol and LAMP-1 vesicles. This chain is Secreted effector protein SseJ (sseJ), found in Salmonella typhimurium (strain LT2 / SGSC1412 / ATCC 700720).